The chain runs to 86 residues: Toxin TdNa7 (86 aa).

Residues 1-20 (MTRFVLFLSCFFLIGMVVEC) form the signal peptide. In terms of domain architecture, LCN-type CS-alpha/beta spans 21-83 (KDGYLMGPDG…TWERATNTCG (63 aa)). 4 disulfides stabilise this stretch: cysteine 31–cysteine 82, cysteine 35–cysteine 57, cysteine 43–cysteine 63, and cysteine 47–cysteine 65. Lysine amide is present on lysine 84.

This sequence belongs to the long (4 C-C) scorpion toxin superfamily. Sodium channel inhibitor family. Beta subfamily. Expressed by the venom gland.

Its subcellular location is the secreted. In terms of biological role, beta toxins bind voltage-independently at site-4 of sodium channels (Nav) and shift the voltage of activation toward more negative potentials thereby affecting sodium channel activation and promoting spontaneous and repetitive firing. This chain is Toxin TdNa7, found in Tityus discrepans (Venezuelan scorpion).